Here is a 329-residue protein sequence, read N- to C-terminus: Gamma-resorcylate decarboxylase (329 aa).

Zn(2+) is bound by residues E8, H10, H167, and D290. Residue D290 is part of the active site.

It belongs to the metallo-dependent hydrolases superfamily. ACMSD family. Zn(2+) serves as cofactor.

The enzyme catalyses 2,6-dihydroxybenzoate + H(+) = resorcinol + CO2. It functions in the pathway aromatic compound metabolism. In terms of biological role, involved in the gamma-resorcylate (2,6-dihydroxybenzoate) catabolism. Catalyzes the reversible decarboxylation of gamma-resorcylate to resorcinol. This Rhodococcus jostii (strain RHA1) protein is Gamma-resorcylate decarboxylase.